We begin with the raw amino-acid sequence, 136 residues long: Ribosome-binding factor A (136 aa).

The protein belongs to the RbfA family. As to quaternary structure, monomer. Binds 30S ribosomal subunits, but not 50S ribosomal subunits or 70S ribosomes.

It localises to the cytoplasm. One of several proteins that assist in the late maturation steps of the functional core of the 30S ribosomal subunit. Associates with free 30S ribosomal subunits (but not with 30S subunits that are part of 70S ribosomes or polysomes). Required for efficient processing of 16S rRNA. May interact with the 5'-terminal helix region of 16S rRNA. The chain is Ribosome-binding factor A from Cellvibrio japonicus (strain Ueda107) (Pseudomonas fluorescens subsp. cellulosa).